The sequence spans 353 residues: Small ribosomal subunit protein uS2 (353 aa).

The segment at 256–353 (DTDEQSSAAN…TPAESTDEQA (98 aa)) is disordered. Composition is skewed to low complexity over residues 263–311 (AANT…AEAP) and 321–339 (ESAT…TPAE). The segment covering 340 to 353 (AEAETPAESTDEQA) has biased composition (acidic residues).

The protein belongs to the universal ribosomal protein uS2 family.

This chain is Small ribosomal subunit protein uS2, found in Beutenbergia cavernae (strain ATCC BAA-8 / DSM 12333 / CCUG 43141 / JCM 11478 / NBRC 16432 / NCIMB 13614 / HKI 0122).